The chain runs to 473 residues: Putative tyrosine recombinase XerC (473 aa).

In terms of domain architecture, Core-binding (CB) spans 4–82; it reads MTLPELTQEY…HLRTVYRYAM (79 aa). A Tyr recombinase domain is found at 118-305; sequence RNWLRFLVQE…DYDLMREVMN (188 aa). Catalysis depends on residues R156, K183, H256, R259, and H283. Y292 serves as the catalytic O-(3'-phospho-DNA)-tyrosine intermediate. A compositionally biased stretch (polar residues) spans 341-352; sequence SGTELQPATTES. Positions 341 to 365 are disordered; that stretch reads SGTELQPATTESSEAKKADDTASNP.

Belongs to the 'phage' integrase family.

The protein localises to the cytoplasm. Its function is as follows. Site-specific tyrosine recombinase, which acts by catalyzing the cutting and rejoining of the recombining DNA molecules. The sequence is that of Putative tyrosine recombinase XerC from Pseudomonas syringae.